Reading from the N-terminus, the 353-residue chain is Ubiquinol oxidase 2, mitochondrial (353 aa).

A mitochondrion-targeting transit peptide spans 1–21 (MSQLITKAALRVLLVCGRGNC). Residues 178-198 (AMMLETVAAVPGMVGGMLLHL) form a helical membrane-spanning segment. Fe cation-binding residues include glutamate 182, glutamate 221, and histidine 224. A helical membrane pass occupies residues 240–260 (LLVMLVQGIFFNSFFVCYVIS). Fe cation-binding residues include glutamate 272, glutamate 323, and histidine 326.

Belongs to the alternative oxidase family. Homodimer; disulfide-linked. Requires Fe cation as cofactor. Maximally expressed in dry seeds. Detected in roots, stems and leaves.

It localises to the mitochondrion inner membrane. The enzyme catalyses 2 a ubiquinol + O2 = 2 a ubiquinone + 2 H2O. Catalyzes the cyanide-resistant oxidation of ubiquinol and the reduction of molecular oxygen to water, but does not translocate protons and consequently is not linked to oxidative phosphorylation. May increase respiration when the cytochrome respiratory pathway is restricted, or in response to low temperatures. The sequence is that of Ubiquinol oxidase 2, mitochondrial (AOX2) from Arabidopsis thaliana (Mouse-ear cress).